The following is a 304-amino-acid chain: Probable 5-dehydro-4-deoxyglucarate dehydratase (304 aa).

This sequence belongs to the DapA family.

The enzyme catalyses 5-dehydro-4-deoxy-D-glucarate + H(+) = 2,5-dioxopentanoate + CO2 + H2O. It participates in carbohydrate acid metabolism; D-glucarate degradation; 2,5-dioxopentanoate from D-glucarate: step 2/2. The chain is Probable 5-dehydro-4-deoxyglucarate dehydratase from Rhodococcus jostii (strain RHA1).